A 114-amino-acid polypeptide reads, in one-letter code: V-type proton ATPase subunit G (114 aa).

The residue at position 2 (S2) is an N-acetylserine.

The protein belongs to the V-ATPase G subunit family. In terms of assembly, V-ATPase is a heteromultimeric enzyme composed of a peripheral catalytic V1 complex (components A to H) attached to an integral membrane V0 proton pore complex (components: a, c, c', c'', d, e, f and VOA1).

The protein localises to the vacuole membrane. In terms of biological role, subunit of the V1 complex of vacuolar(H+)-ATPase (V-ATPase), a multisubunit enzyme composed of a peripheral complex (V1) that hydrolyzes ATP and a membrane integral complex (V0) that translocates protons. V-ATPase is responsible for acidifying and maintaining the pH of intracellular compartments. The chain is V-type proton ATPase subunit G from Saccharomyces cerevisiae (strain ATCC 204508 / S288c) (Baker's yeast).